Reading from the N-terminus, the 566-residue chain is Glucose starvation modulator protein 1 (566 aa).

A DNA-binding region (zn(2)-C6 fungal-type) is located at residues 20–48; that stretch reads CVFCHQKHLQCSNERPCKNCVKRNIAHGC. Disordered regions lie at residues 63 to 92 and 250 to 270; these read GVPGAVSNKQSTPRKKLKTSPVSTSVSPMD and KQASPSPSNTSTSENNTNTLS. Low complexity predominate over residues 253–270; that stretch reads SPSPSNTSTSENNTNTLS.

The protein belongs to the ERT1/acuK family.

It localises to the nucleus. Functionally, transcription factor which regulates nonfermentable carbon utilization. This is Glucose starvation modulator protein 1 (GSM1) from Candida albicans (strain WO-1) (Yeast).